A 699-amino-acid chain; its full sequence is tRNA(Met) cytidine acetyltransferase TmcA (699 aa).

ATP-binding positions include Q178, 200–209 (GRGKSTLAGM), and R322. Positions 408–547 (MHIASAQVAG…SGCYSAMAIL (140 aa)) constitute an N-acetyltransferase domain. Residues 475-477 (IAV) and 482-488 (RRQGIGR) each bind acetyl-CoA.

The protein belongs to the RNA cytidine acetyltransferase family. TmcA subfamily.

It localises to the cytoplasm. The enzyme catalyses cytidine(34) in elongator tRNA(Met) + acetyl-CoA + ATP + H2O = N(4)-acetylcytidine(34) in elongator tRNA(Met) + ADP + phosphate + CoA + H(+). Catalyzes the formation of N(4)-acetylcytidine (ac(4)C) at the wobble position of tRNA(Met), by using acetyl-CoA as an acetyl donor and ATP (or GTP). This chain is tRNA(Met) cytidine acetyltransferase TmcA, found in Pectobacterium atrosepticum (strain SCRI 1043 / ATCC BAA-672) (Erwinia carotovora subsp. atroseptica).